The following is a 362-amino-acid chain: Protein-glutamate methylesterase/protein-glutamine glutaminase (362 aa).

The Response regulatory domain occupies Lys5–Lys122. 4-aspartylphosphate is present on Asp56. Positions Leu163–Met355 constitute a CheB-type methylesterase domain. Catalysis depends on residues Ser175, His201, and Asp297.

This sequence belongs to the CheB family. In terms of processing, phosphorylated by CheA. Phosphorylation of the N-terminal regulatory domain activates the methylesterase activity.

Its subcellular location is the cytoplasm. The enzyme catalyses [protein]-L-glutamate 5-O-methyl ester + H2O = L-glutamyl-[protein] + methanol + H(+). It catalyses the reaction L-glutaminyl-[protein] + H2O = L-glutamyl-[protein] + NH4(+). Its function is as follows. Involved in chemotaxis. Part of a chemotaxis signal transduction system that modulates chemotaxis in response to various stimuli. Catalyzes the demethylation of specific methylglutamate residues introduced into the chemoreceptors (methyl-accepting chemotaxis proteins or MCP) by CheR. Also mediates the irreversible deamidation of specific glutamine residues to glutamic acid. The protein is Protein-glutamate methylesterase/protein-glutamine glutaminase of Paraburkholderia xenovorans (strain LB400).